Consider the following 325-residue polypeptide: L-lactate dehydrogenase (325 aa).

Residues Val-21, Asp-42, Lys-47, Tyr-73, and 87–88 (GA) contribute to the NAD(+) site. Substrate contacts are provided by residues Gln-90, Arg-96, and 128 to 131 (NPVD). NAD(+) contacts are provided by residues 126 to 128 (ATN) and Ser-151. 156–159 (DTAR) provides a ligand contact to substrate. Arg-161 and His-176 together coordinate beta-D-fructose 1,6-bisphosphate. The Proton acceptor role is filled by His-183. A Phosphotyrosine modification is found at Tyr-228. Thr-237 lines the substrate pocket.

It belongs to the LDH/MDH superfamily. LDH family. Homotetramer.

The protein resides in the cytoplasm. It carries out the reaction (S)-lactate + NAD(+) = pyruvate + NADH + H(+). It participates in fermentation; pyruvate fermentation to lactate; (S)-lactate from pyruvate: step 1/1. Allosterically activated by fructose 1,6-bisphosphate (FBP). In terms of biological role, catalyzes the conversion of lactate to pyruvate. This chain is L-lactate dehydrogenase, found in Shouchella clausii (strain KSM-K16) (Alkalihalobacillus clausii).